The sequence spans 634 residues: 1-deoxy-D-xylulose-5-phosphate synthase (634 aa).

Thiamine diphosphate-binding positions include His-79 and 120–122 (GHA). Asp-151 contributes to the Mg(2+) binding site. Thiamine diphosphate-binding positions include 152–153 (GS), Asn-180, Tyr-292, and Glu-376. Asn-180 is a Mg(2+) binding site.

This sequence belongs to the transketolase family. DXPS subfamily. In terms of assembly, homodimer. Mg(2+) serves as cofactor. Requires thiamine diphosphate as cofactor.

The enzyme catalyses D-glyceraldehyde 3-phosphate + pyruvate + H(+) = 1-deoxy-D-xylulose 5-phosphate + CO2. Its pathway is metabolic intermediate biosynthesis; 1-deoxy-D-xylulose 5-phosphate biosynthesis; 1-deoxy-D-xylulose 5-phosphate from D-glyceraldehyde 3-phosphate and pyruvate: step 1/1. In terms of biological role, catalyzes the acyloin condensation reaction between C atoms 2 and 3 of pyruvate and glyceraldehyde 3-phosphate to yield 1-deoxy-D-xylulose-5-phosphate (DXP). The chain is 1-deoxy-D-xylulose-5-phosphate synthase from Porphyromonas gingivalis (strain ATCC BAA-308 / W83).